A 59-amino-acid polypeptide reads, in one-letter code: Large ribosomal subunit protein uL30 (59 aa).

This sequence belongs to the universal ribosomal protein uL30 family. In terms of assembly, part of the 50S ribosomal subunit.

This is Large ribosomal subunit protein uL30 from Clostridium botulinum (strain Alaska E43 / Type E3).